The sequence spans 41 residues: uncharacterized protein (41 aa).

The interval 1–41 (MGKKHRNRITGQKKNNHIPEKDIIAAEEAHGKEYSAAKRKP) is disordered. Positions 17–41 (HIPEKDIIAAEEAHGKEYSAAKRKP) are enriched in basic and acidic residues.

This is an uncharacterized protein from Bacillus subtilis (strain 168).